The primary structure comprises 377 residues: Caspase-4 (377 aa).

Residues 1-59 form a required for LPS-binding region; it reads MAEDKHNKNPLKMLESLGKELISGLLDDFVEKNVLKLEEEEKKKIYDAKLQDKARVLVD. Residues 1–80 constitute a propeptide that is removed on maturation; it reads MAEDKHNKNP…VFVQTFLNID (80 aa). The CARD domain occupies 1-91; sequence MAEDKHNKNP…NSTSIKAPEE (91 aa). Serine 83 is modified (phosphoserine). Catalysis depends on residues histidine 210 and cysteine 258. Residues 271–289 constitute a propeptide that is removed on maturation; it reads SPPALADSFSQSSENLEED.

Belongs to the peptidase C14A family. In terms of assembly, heterotetramer that consists of two anti-parallel arranged heterodimers, each one formed by a 20 kDa (Caspase-4 subunit p20) and a 10 kDa (Caspase-4 subunit p10) subunit. Upon direct LPS-binding, forms large homooligomers, resulting in its activation. These oligomers are often referred to as 'non-canonical inflammasomes'. In its precursor form, interacts with TMEM214; this interaction is required for association with the endoplasmic reticulum membrane. Interacts with CASP1. Interacts with NOD2. Interacts with Serpinb1a, Serpinb1b and Serpinb1c; these interactions regulate CASP4 activity. Heterotetramer that consists of two anti-parallel arranged heterodimers, each one formed by a 20 kDa (Caspase-4 subunit p20) and a 10 kDa (Caspase-4 subunit p10) subunit. Post-translationally, in response to activation signals, undergoes autoproteolytic cleavage and activation.

Its subcellular location is the cytoplasm. The protein localises to the cytosol. It is found in the endoplasmic reticulum membrane. It localises to the mitochondrion. The protein resides in the inflammasome. Its subcellular location is the secreted. The catalysed reaction is Strict requirement for Asp at the P1 position. It has a preferred cleavage sequence of Tyr-Val-Ala-Asp-|- but also cleaves at Asp-Glu-Val-Asp-|-.. Activated by homooligomerization induced by direct binding to cytosolic LPS, in a TLR4-independent manner. In addition to LPS, CASP4/CASP11 may also be activated by oxidized phospholipid 1-palmitoyl-2-arachidonoyl- sn-glycero-3-phosphorylcholine, an oxidized phospholipid (oxPAPC), in dendritic cells, promoting adaptive immunity. The role of oxPAPC is however unclear and another report suggests that oxPAPC competes with LPS-binding and inhibits the non-canonical inflammasome in macrophages. Inflammatory caspase that acts as the effector of the non-canonical inflammasome by mediating lipopolysaccharide (LPS)-induced pyroptosis. Also indirectly activates the NLRP3 and NLRP6 inflammasomes. Acts as a thiol protease that cleaves a tetrapeptide after an Asp residue at position P1: catalyzes cleavage of CGAS, GSDMD and IL18. Effector of the non-canonical inflammasome independently of NLRP3 inflammasome and CASP1: the non-canonical inflammasome promotes pyroptosis through GSDMD cleavage without involving secretion of cytokine IL1B. In the non-canonical inflammasome, CASP4 is activated by direct binding to the lipid A moiety of LPS without the need of an upstream sensor. LPS-binding promotes CASP4 activation and CASP4-mediated cleavage of GSDMD and IL18, followed by IL18 secretion through the GSDMD pore, pyroptosis of infected cells and their extrusion into the gut lumen. Also indirectly promotes secretion of mature cytokines (IL1A and HMGB1) downstream of GSDMD-mediated pyroptosis via activation of the NLRP3 and NLRP6 inflammasomes. Involved in NLRP3-dependent CASP1 activation and IL1B secretion in response to non-canonical activators, such as UVB radiation or cholera enterotoxin. Involved in NLRP6 inflammasome-dependent activation in response to lipoteichoic acid (LTA), a cell-wall component of Gram-positive bacteria, which leads to CASP1 activation and IL1B secretion. Involved in LPS-induced IL6 secretion; this activity may not require caspase enzymatic activity. The non-canonical inflammasome is required for innate immunity to cytosolic, but not vacuolar, bacteria. Plays a crucial role in the restriction of S.typhimurium replication in colonic epithelial cells during infection. Pyroptosis limits bacterial replication, while cytokine secretion promotes the recruitment and activation of immune cells and triggers mucosal inflammation. May also act as an activator of adaptive immunity in dendritic cells, following activation by oxidized phospholipid 1-palmitoyl-2-arachidonoyl- sn-glycero-3-phosphorylcholine, an oxidized phospholipid (oxPAPC). Cleavage of GSDMD is not strictly dependent on the consensus cleavage site but depends on an exosite interface on CASP4 that recognizes and binds the Gasdermin-D, C-terminal (GSDMD-CT) part. Catalyzes cleavage and maturation of IL18; IL18 processing also depends of the exosite interface on CASP4. In contrast, it does not directly process IL1B. During non-canonical inflammasome activation, cuts CGAS and may play a role in the regulation of antiviral innate immune activation. In Bos taurus (Bovine), this protein is Caspase-4 (CASP4).